The primary structure comprises 298 residues: ADP-ribosylation factor GTPase-activating protein effector protein 2 (298 aa).

Ser-2 carries the post-translational modification N-acetylserine. The region spanning 8-130 (KKALSALLRD…KWIGDLSSIE (123 aa)) is the Arf-GAP domain. The C4-type zinc finger occupies 23-47 (CADCKAQLHPRWASWSLGVFICIKC). The tract at residues 137–180 (EPVLHKPSANHSLPASNARLDQSSNSLQKTQTQPPSHLLSTSRS) is disordered. Over residues 145-171 (ANHSLPASNARLDQSSNSLQKTQTQPP) the composition is skewed to polar residues. Ser-180, Ser-183, and Ser-207 each carry phosphoserine.

Its subcellular location is the cytoplasm. The protein resides in the golgi apparatus. Its function is as follows. GTPase-activating protein for the ADP ribosylation factor family. This chain is ADP-ribosylation factor GTPase-activating protein effector protein 2 (AGE2), found in Saccharomyces cerevisiae (strain ATCC 204508 / S288c) (Baker's yeast).